Reading from the N-terminus, the 235-residue chain is 2-C-methyl-D-erythritol 4-phosphate cytidylyltransferase (235 aa).

Belongs to the IspD/TarI cytidylyltransferase family. IspD subfamily.

It carries out the reaction 2-C-methyl-D-erythritol 4-phosphate + CTP + H(+) = 4-CDP-2-C-methyl-D-erythritol + diphosphate. Its pathway is isoprenoid biosynthesis; isopentenyl diphosphate biosynthesis via DXP pathway; isopentenyl diphosphate from 1-deoxy-D-xylulose 5-phosphate: step 2/6. Catalyzes the formation of 4-diphosphocytidyl-2-C-methyl-D-erythritol from CTP and 2-C-methyl-D-erythritol 4-phosphate (MEP). The sequence is that of 2-C-methyl-D-erythritol 4-phosphate cytidylyltransferase from Ectopseudomonas mendocina (strain ymp) (Pseudomonas mendocina).